The primary structure comprises 326 residues: Siroheme decarboxylase NirDL subunit (326 aa).

It belongs to the Ahb/Nir family. As to quaternary structure, forms a complex composed of NirDL, NirG and NirH. All proteins are required for the total conversion of siroheme to didecarboxysiroheme.

It catalyses the reaction siroheme + 2 H(+) = 12,18-didecarboxysiroheme + 2 CO2. It participates in porphyrin-containing compound metabolism. In terms of biological role, involved in heme d1 biosynthesis. Catalyzes the decarboxylation of siroheme into didecarboxysiroheme. Siroheme is probably decarboxylated to monodecarboxysiroheme, which is in turn decarboxylated to didecarboxysiroheme. The polypeptide is Siroheme decarboxylase NirDL subunit (Paracoccus pantotrophus (Thiosphaera pantotropha)).